The primary structure comprises 328 residues: MSTFDLQPGVDFQQAGKQVLQIEREGLAQLDQYINEDFSRACEAIFRCHGKVVVMGMGKSGHIGCKIAATFASTGTPAFFVHPGEASHGDLGMITPQDIVLAISNSGESNEILTLIPVLKRQKILLICMSSNPESTMGKAADIHLCINVPQEACPLGLAPTTSTTATLVMGDALAVALLKARGFTQEDFALSHPGGALGRKLLLRISDIMHTGTEIPTVSPDASLRDALLEITRKSLGLTVICDDSMRIKGIFTDGDLRRVFDMGIDLNNAKIADVMTRGGIRVPPNILAVDALNLMESRHITALLVADGDQLLGVVHMHDMLRAGVV.

In terms of domain architecture, SIS spans 41 to 184; sequence ACEAIFRCHG…AVALLKARGF (144 aa). Substrate is bound by residues 75-76, H82, H88, 114-123, and 148-150; these read GT, TLIPVLKRQK, and NVP. H82 lines the Zn(2+) pocket. The CBS 1 domain occupies 210-268; that stretch reads MHTGTEIPTVSPDASLRDALLEITRKSLGLTVICDDSMRIKGIFTDGDLRRVFDMGIDL. Residue D275 participates in substrate binding. The region spanning 277-328 is the CBS 2 domain; that stretch reads MTRGGIRVPPNILAVDALNLMESRHITALLVADGDQLLGVVHMHDMLRAGVV.

Belongs to the SIS family. GutQ/KpsF subfamily. In terms of assembly, homotetramer.

The enzyme catalyses D-arabinose 5-phosphate = D-ribulose 5-phosphate. The protein operates within carbohydrate biosynthesis; 3-deoxy-D-manno-octulosonate biosynthesis; 3-deoxy-D-manno-octulosonate from D-ribulose 5-phosphate: step 1/3. Its pathway is bacterial outer membrane biogenesis; lipopolysaccharide biosynthesis. In terms of biological role, involved in the biosynthesis of 3-deoxy-D-manno-octulosonate (KDO), a unique 8-carbon sugar component of lipopolysaccharides (LPSs). Catalyzes the reversible aldol-ketol isomerization between D-ribulose 5-phosphate (Ru5P) and D-arabinose 5-phosphate (A5P). In Yersinia pestis, this protein is Arabinose 5-phosphate isomerase KdsD (kdsD).